Here is a 469-residue protein sequence, read N- to C-terminus: Ribulose bisphosphate carboxylase large chain (469 aa).

Lysine 5 bears the N6,N6,N6-trimethyllysine mark. Substrate contacts are provided by asparagine 114 and threonine 164. The active-site Proton acceptor is the lysine 166. Residue lysine 168 participates in substrate binding. Lysine 192, aspartate 194, and glutamate 195 together coordinate Mg(2+). The residue at position 192 (lysine 192) is an N6-carboxylysine. The Proton acceptor role is filled by histidine 285. Substrate contacts are provided by arginine 286, histidine 318, and serine 370.

This sequence belongs to the RuBisCO large chain family. Type I subfamily. Heterohexadecamer of 8 large chains and 8 small chains; disulfide-linked. The disulfide link is formed within the large subunit homodimers. The cofactor is Mg(2+). In terms of processing, the disulfide bond which can form in the large chain dimeric partners within the hexadecamer appears to be associated with oxidative stress and protein turnover.

Its subcellular location is the plastid. It localises to the chloroplast. It catalyses the reaction 2 (2R)-3-phosphoglycerate + 2 H(+) = D-ribulose 1,5-bisphosphate + CO2 + H2O. The enzyme catalyses D-ribulose 1,5-bisphosphate + O2 = 2-phosphoglycolate + (2R)-3-phosphoglycerate + 2 H(+). Its function is as follows. RuBisCO catalyzes two reactions: the carboxylation of D-ribulose 1,5-bisphosphate, the primary event in carbon dioxide fixation, as well as the oxidative fragmentation of the pentose substrate in the photorespiration process. Both reactions occur simultaneously and in competition at the same active site. The sequence is that of Ribulose bisphosphate carboxylase large chain from Cephalanthus occidentalis (Common buttonbush).